Consider the following 357-residue polypeptide: Heat-inducible transcription repressor HrcA (357 aa).

This sequence belongs to the HrcA family.

Negative regulator of class I heat shock genes (grpE-dnaK-dnaJ and groELS operons). Prevents heat-shock induction of these operons. The protein is Heat-inducible transcription repressor HrcA of Chlorobium limicola (strain DSM 245 / NBRC 103803 / 6330).